The primary structure comprises 124 residues: Fluoride-specific ion channel FluC (124 aa).

A run of 4 helical transmembrane segments spans residues valine 4–leucine 24, phenylalanine 35–glycine 55, proline 62–phenylalanine 82, and leucine 95–leucine 115. Positions 74 and 77 each coordinate Na(+).

It belongs to the fluoride channel Fluc/FEX (TC 1.A.43) family.

Its subcellular location is the cell inner membrane. It catalyses the reaction fluoride(in) = fluoride(out). Na(+) is not transported, but it plays an essential structural role and its presence is essential for fluoride channel function. Functionally, fluoride-specific ion channel. Important for reducing fluoride concentration in the cell, thus reducing its toxicity. This Shewanella halifaxensis (strain HAW-EB4) protein is Fluoride-specific ion channel FluC.